Reading from the N-terminus, the 177-residue chain is ATP synthase subunit delta (177 aa).

It belongs to the ATPase delta chain family. In terms of assembly, F-type ATPases have 2 components, F(1) - the catalytic core - and F(0) - the membrane proton channel. F(1) has five subunits: alpha(3), beta(3), gamma(1), delta(1), epsilon(1). F(0) has three main subunits: a(1), b(2) and c(10-14). The alpha and beta chains form an alternating ring which encloses part of the gamma chain. F(1) is attached to F(0) by a central stalk formed by the gamma and epsilon chains, while a peripheral stalk is formed by the delta and b chains.

The protein resides in the cell inner membrane. F(1)F(0) ATP synthase produces ATP from ADP in the presence of a proton or sodium gradient. F-type ATPases consist of two structural domains, F(1) containing the extramembraneous catalytic core and F(0) containing the membrane proton channel, linked together by a central stalk and a peripheral stalk. During catalysis, ATP synthesis in the catalytic domain of F(1) is coupled via a rotary mechanism of the central stalk subunits to proton translocation. In terms of biological role, this protein is part of the stalk that links CF(0) to CF(1). It either transmits conformational changes from CF(0) to CF(1) or is implicated in proton conduction. The chain is ATP synthase subunit delta from Janthinobacterium sp. (strain Marseille) (Minibacterium massiliensis).